A 134-amino-acid chain; its full sequence is Large-conductance mechanosensitive channel (134 aa).

Transmembrane regions (helical) follow at residues Val16–Leu36 and Gly81–Val101.

This sequence belongs to the MscL family. In terms of assembly, homopentamer.

It is found in the cell inner membrane. In terms of biological role, channel that opens in response to stretch forces in the membrane lipid bilayer. May participate in the regulation of osmotic pressure changes within the cell. This is Large-conductance mechanosensitive channel from Xylella fastidiosa (strain M12).